The sequence spans 336 residues: MKDRYILAVESSCDETSVAILKNDKELLANIIASQVESHKRFGGVVPEVASRHHVEVVTTCFEDALQEAGIVASDLDAVAVTYGPGLVGALLVGMAAAKAFAWANKLPLIPVNHMAGHLMAARDVKELQYPLLALLVSGGHTELVYVSGPGDYKIVGETRDDAVGEAYDKVGRVMGLTYPAGREIDQLAHKGQDTYHFPRAMIKEDHLEFSFSGLKSAFINLHHNAEQKGEALVLEDLCASFQAAVLDILLAKTQKALLKYPVKTLVVAGGVAANQGLRERLATDISPDIDVVIPPLRLCGDNAGMIALAAAIEFEKENFASLKLNAKPSLAFEGL.

Fe cation-binding residues include H114 and H118. Residues L136–G140, D169, G182, D186, and N275 each bind substrate. D302 provides a ligand contact to Fe cation.

The protein belongs to the KAE1 / TsaD family. Requires Fe(2+) as cofactor.

It is found in the cytoplasm. The enzyme catalyses L-threonylcarbamoyladenylate + adenosine(37) in tRNA = N(6)-L-threonylcarbamoyladenosine(37) in tRNA + AMP + H(+). Required for the formation of a threonylcarbamoyl group on adenosine at position 37 (t(6)A37) in tRNAs that read codons beginning with adenine. Is involved in the transfer of the threonylcarbamoyl moiety of threonylcarbamoyl-AMP (TC-AMP) to the N6 group of A37, together with TsaE and TsaB. TsaD likely plays a direct catalytic role in this reaction. This chain is tRNA N6-adenosine threonylcarbamoyltransferase, found in Streptococcus agalactiae serotype III (strain NEM316).